Consider the following 258-residue polypeptide: Probable parvulin-type peptidyl-prolyl cis-trans isomerase (258 aa).

The first 19 residues, Met-1–Ala-19, serve as a signal peptide directing secretion. The region spanning Lys-127–Asp-219 is the PpiC domain. Basic and acidic residues predominate over residues Asp-158–Gly-175. The disordered stretch occupies residues Asp-158–Gly-178.

The protein belongs to the PpiC/parvulin rotamase family.

It catalyses the reaction [protein]-peptidylproline (omega=180) = [protein]-peptidylproline (omega=0). In Bordetella bronchiseptica (strain ATCC BAA-588 / NCTC 13252 / RB50) (Alcaligenes bronchisepticus), this protein is Probable parvulin-type peptidyl-prolyl cis-trans isomerase.